Consider the following 323-residue polypeptide: Beta-ketoacyl-[acyl-carrier-protein] synthase III (323 aa).

Catalysis depends on residues Cys113 and His250. The tract at residues 251–255 is ACP-binding; the sequence is QANRR. Asn280 is a catalytic residue.

This sequence belongs to the thiolase-like superfamily. FabH family. As to quaternary structure, homodimer.

The protein localises to the cytoplasm. It carries out the reaction malonyl-[ACP] + acetyl-CoA + H(+) = 3-oxobutanoyl-[ACP] + CO2 + CoA. It functions in the pathway lipid metabolism; fatty acid biosynthesis. Catalyzes the condensation reaction of fatty acid synthesis by the addition to an acyl acceptor of two carbons from malonyl-ACP. Catalyzes the first condensation reaction which initiates fatty acid synthesis and may therefore play a role in governing the total rate of fatty acid production. Possesses both acetoacetyl-ACP synthase and acetyl transacylase activities. Its substrate specificity determines the biosynthesis of branched-chain and/or straight-chain of fatty acids. In Rhizobium meliloti (strain 1021) (Ensifer meliloti), this protein is Beta-ketoacyl-[acyl-carrier-protein] synthase III.